A 557-amino-acid chain; its full sequence is Leucine-rich glioma-inactivated protein 1 (557 aa).

An N-terminal signal peptide occupies residues 1–34 (MESESSRRMGNACIPLKRIAYFLCLFSVVLLTEG). The LRRNT domain occupies 35-72 (KKPAKPKCPAVCTCSKDNALCENARSIPRTVPPDVISL). LRR repeat units follow at residues 92-113 (SLQL…AFIG), 116-137 (HLEY…TFRG), and 140-161 (SLIH…IFKG). The region spanning 173–223 (NAFNCDCKLKWLVEWLGHTNATVEDIYCEGPPEYKKRKINSLSPKDFDCII) is the LRRCT domain. The N-linked (GlcNAc...) asparagine glycan is linked to Asn-192. EAR repeat units lie at residues 225 to 267 (EFAK…EWDH), 271 to 313 (TFRN…KRDG), 317 to 364 (KFIK…KWNG), 366 to 415 (GFYS…QWSK), 419 to 462 (LFTN…KWGG), 464 to 506 (SFQD…NWDA), and 510 to 552 (KFVK…KHVI). The N-linked (GlcNAc...) asparagine glycan is linked to Asn-277. N-linked (GlcNAc...) asparagine glycosylation is present at Asn-422.

As to quaternary structure, oligomer. Interacts with KCNA1 within a complex containing KCNA1, KCNA4 and KCNAB1. Part of a complex containing ADAM22, DLG4/PSD95 and CACNG2 (stargazin). Can bind to ADAM11 and ADAM23. In terms of processing, glycosylated. Expressed in the brain (at protein level). Expressed in cerebellar cortex basket cell terminals (at protein level). Highly expressed in the dentate gyrus and CA3 field of the hippocampus.

The protein resides in the secreted. It localises to the synapse. Its subcellular location is the cytoplasm. It is found in the golgi apparatus. The protein localises to the endoplasmic reticulum. Regulates voltage-gated potassium channels assembled from KCNA1, KCNA4 and KCNAB1. It slows down channel inactivation by precluding channel closure mediated by the KCNAB1 subunit. Ligand for ADAM22 that positively regulates synaptic transmission mediated by AMPA-type glutamate receptors. Plays a role in suppressing the production of MMP1/3 through the phosphatidylinositol 3-kinase/ERK pathway. The polypeptide is Leucine-rich glioma-inactivated protein 1 (Mus musculus (Mouse)).